The chain runs to 317 residues: Beta-ketoacyl-[acyl-carrier-protein] synthase III (317 aa).

Residues Cys112 and His244 contribute to the active site. Residues Gln245–Arg249 form an ACP-binding region. The active site involves Asn274.

This sequence belongs to the thiolase-like superfamily. FabH family. As to quaternary structure, homodimer.

It is found in the cytoplasm. The enzyme catalyses malonyl-[ACP] + acetyl-CoA + H(+) = 3-oxobutanoyl-[ACP] + CO2 + CoA. It functions in the pathway lipid metabolism; fatty acid biosynthesis. Functionally, catalyzes the condensation reaction of fatty acid synthesis by the addition to an acyl acceptor of two carbons from malonyl-ACP. Catalyzes the first condensation reaction which initiates fatty acid synthesis and may therefore play a role in governing the total rate of fatty acid production. Possesses both acetoacetyl-ACP synthase and acetyl transacylase activities. Its substrate specificity determines the biosynthesis of branched-chain and/or straight-chain of fatty acids. In Rickettsia prowazekii (strain Madrid E), this protein is Beta-ketoacyl-[acyl-carrier-protein] synthase III.